Consider the following 145-residue polypeptide: Deoxyuridine 5'-triphosphate nucleotidohydrolase (145 aa).

Substrate is bound by residues 65–67 (RSG), Asn-78, 82–84 (TID), and Met-92.

The protein belongs to the dUTPase family. It depends on Mg(2+) as a cofactor.

It catalyses the reaction dUTP + H2O = dUMP + diphosphate + H(+). The protein operates within pyrimidine metabolism; dUMP biosynthesis; dUMP from dCTP (dUTP route): step 2/2. In terms of biological role, this enzyme is involved in nucleotide metabolism: it produces dUMP, the immediate precursor of thymidine nucleotides and it decreases the intracellular concentration of dUTP so that uracil cannot be incorporated into DNA. The protein is Deoxyuridine 5'-triphosphate nucleotidohydrolase of Chlorobium phaeobacteroides (strain BS1).